A 335-amino-acid polypeptide reads, in one-letter code: DNA polymerase beta (335 aa).

Residue Lys-41 forms a Glycyl lysine isopeptide (Lys-Gly) (interchain with G-Cter in ubiquitin) linkage. Lys-60 is a binding site for K(+). Residue Lys-60 coordinates Na(+). Lys-61 participates in a covalent cross-link: Glycyl lysine isopeptide (Lys-Gly) (interchain with G-Cter in ubiquitin). Leu-62 and Val-65 together coordinate K(+). Na(+)-binding residues include Leu-62 and Val-65. The active-site Nucleophile; Schiff-base intermediate with DNA; for 5'-dRP lyase activity is Lys-72. The residue at position 72 (Lys-72) is an N6-acetyllysine. Residue Lys-81 forms a Glycyl lysine isopeptide (Lys-Gly) (interchain with G-Cter in ubiquitin) linkage. Omega-N-methylarginine; by PRMT6 is present on Arg-83. The K(+) site is built by Thr-101, Val-103, and Ile-106. Na(+) is bound by residues Thr-101, Val-103, and Ile-106. Arg-149 lines the a 2'-deoxyribonucleoside 5'-triphosphate pocket. Arg-152 carries the omega-N-methylarginine; by PRMT6 modification. 4 residues coordinate a 2'-deoxyribonucleoside 5'-triphosphate: Ser-180, Arg-183, Gly-189, and Asp-190. The DNA-binding stretch occupies residues Arg-183–Asp-192. Residues Asp-190, Asp-192, and Asp-256 each coordinate Mg(2+).

This sequence belongs to the DNA polymerase type-X family. In terms of assembly, monomer. Binds single-stranded DNA (ssDNA). Interacts with APEX1, LIG1, LIG3, FEN1, PCNA and XRCC1. Interacts with HUWE1/ARF-BP1, STUB1/CHIP and USP47. Interacts with FAM168A. It depends on Mg(2+) as a cofactor. Post-translationally, methylation by PRMT6 stimulates the polymerase activity by enhancing DNA binding and processivity. Ubiquitinated at Lys-41, Lys-61 and Lys-81: monoubiquitinated by HUWE1/ARF-BP1. Monoubiquitinated protein is then the target of STUB1/CHIP, which catalyzes polyubiquitination from monoubiquitin, leading to degradation by the proteasome. USP47 mediates the deubiquitination of monoubiquitinated protein, preventing polyubiquitination by STUB1/CHIP and its subsequent degradation.

The protein localises to the nucleus. The protein resides in the cytoplasm. It catalyses the reaction DNA(n) + a 2'-deoxyribonucleoside 5'-triphosphate = DNA(n+1) + diphosphate. The catalysed reaction is a 5'-end 2'-deoxyribose-2'-deoxyribonucleotide-DNA = (2E,4S)-4-hydroxypenten-2-al-5-phosphate + a 5'-end 5'-phospho-2'-deoxyribonucleoside-DNA + H(+). It carries out the reaction 2'-deoxyribonucleotide-(2'-deoxyribose 5'-phosphate)-2'-deoxyribonucleotide-DNA = a 3'-end 2'-deoxyribonucleotide-(2,3-dehydro-2,3-deoxyribose 5'-phosphate)-DNA + a 5'-end 5'-phospho-2'-deoxyribonucleoside-DNA + H(+). In terms of biological role, repair polymerase that plays a key role in base-excision repair. During this process, the damaged base is excised by specific DNA glycosylases, the DNA backbone is nicked at the abasic site by an apurinic/apyrimidic (AP) endonuclease, and POLB removes 5'-deoxyribose-phosphate from the preincised AP site acting as a 5'-deoxyribose-phosphate lyase (5'-dRP lyase); through its DNA polymerase activity, it adds one nucleotide to the 3' end of the arising single-nucleotide gap. Conducts 'gap-filling' DNA synthesis in a stepwise distributive fashion rather than in a processive fashion as for other DNA polymerases. It is also able to cleave sugar-phosphate bonds 3' to an intact AP site, acting as an AP lyase. This Rattus norvegicus (Rat) protein is DNA polymerase beta (Polb).